A 512-amino-acid polypeptide reads, in one-letter code: cAMP-dependent protein kinase catalytic subunit (512 aa).

Polar residues predominate over residues 1–15; that stretch reads MDTTAVASKGSTNVG. Disordered stretches follow at residues 1–79 and 118–166; these read MDTT…SSLW and IDNL…GLRD. Positions 16 to 27 are enriched in low complexity; the sequence is SSTDTLSTSASL. Composition is skewed to polar residues over residues 32–52 and 62–79; these read NAGS…SFNG and SDAS…SSLW. The span at 143–166 shows a compositional bias: basic and acidic residues; it reads SRDGRGELGSEHGERRSAMDGLRD. In terms of domain architecture, Protein kinase spans 201–456; it reads FNFLQTLGTG…SMDIIMHPWF (256 aa). Residues 207–215 and Lys230 contribute to the ATP site; that span reads LGTGSFGRV. Asp324 acts as the Proton acceptor in catalysis. The residue at position 356 (Thr356) is a Phosphothreonine. The 56-residue stretch at 457–512 folds into the AGC-kinase C-terminal domain; sequence RDISWDKILTRKIEVPYVPPIQAGMGDSSQFDAYADVATDYGTSEDPEFTSIFKDF.

It belongs to the protein kinase superfamily. AGC Ser/Thr protein kinase family. cAMP subfamily.

The catalysed reaction is L-seryl-[protein] + ATP = O-phospho-L-seryl-[protein] + ADP + H(+). It carries out the reaction L-threonyl-[protein] + ATP = O-phospho-L-threonyl-[protein] + ADP + H(+). With respect to regulation, activated by cAMP. In Schizosaccharomyces pombe (strain 972 / ATCC 24843) (Fission yeast), this protein is cAMP-dependent protein kinase catalytic subunit (pka1).